The chain runs to 309 residues: MSALTSQPTSSGSSEKIPRLRGWRAKAAGVVLAALALTTGVAAPAPAAANPYERGPDPTTASIEATSGSFATSTVTVSRLAVSGFGGGTIYYPTTTTAGTFGALSIAPGFTATQSSIAWLGPRLASQGFVVFTIDTLTTSDQPDSRGRQLLASLDYLTQQSSVRSRIDSTRLGVVGHSMGGGGTLEAARSRPTLQAAVPLTAWDLTKNWSTLQVPTLVVGAQSDTVAPVASHSIPFYTSLPSTLDRAYLELRGASHFAPNSPNTTIAKYTLSWLKRFIDNDTRYEQFLCPIPSTSLSISDYRGNCPHNG.

The signal sequence occupies residues 1 to 47 (MSALTSQPTSSGSSEKIPRLRGWRAKAAGVVLAALALTTGVAAPAPA). Ser-178 functions as the Nucleophile in the catalytic mechanism. Active-site charge relay system residues include Asp-224 and His-256. Cys-289 and Cys-305 are disulfide-bonded.

Belongs to the AB hydrolase superfamily.

It is found in the secreted. The enzyme catalyses a carboxylic ester + H2O = an alcohol + a carboxylate + H(+). It carries out the reaction a triacylglycerol + H2O = a diacylglycerol + a fatty acid + H(+). It catalyses the reaction 1,2,3-tri-(9Z-octadecenoyl)-glycerol + H2O = di-(9Z)-octadecenoylglycerol + (9Z)-octadecenoate + H(+). The catalysed reaction is (6-hydroxyhexanoyl)(n) + H2O = (6-hydroxyhexanoyl)(n-1) + 6-hydroxyhexanoate + H(+). The enzyme catalyses cutin + H2O = cutin monomers.. With respect to regulation, no effect on activity by SDS or chelating agents ethylenediaminetetraacetic acid (EDTA) or sodium citrate. No effect on activity by metal ions Ag(+), Ba(2+), Ca(2+), Co(2+), Cu(2+), Mn(2+), Ni(2+), Pb(2+) or Zn(2+). Activated by 1 mM digitonin and sodium deoxycholate, and reducing agents 1 mM 1,4-dithiothreitol, beta-mercaptoethanol and ascorbic acid. Activated by benzene, n-hexane, p-xylene and toluene. Activated by Fe(3+). Inhibited slightly by 1 mM of different chain length fatty acids, and only marginally by 6.0 M urea. Inhibited strongly with chemical modification by reagents phenyl methyl sulfonylfluorid (PMSF), 1-ethyl-3-(3-dimethylaminopropyl) carbodiimide (EDAC), diethylpyrocarbonate (DEPC) and N-bromosuccinimide (NBS). Inhibited by pyridine, DMSO, t-butanol and dodecane. Inhibited by Li(+), Hg(2+) and Mg(2+). No inhibition with chemical modification by reagents N-acetylimidazole (NAI), citraconic anhydride (CA), iodoacetate (IA) and phenylglyoxal (PG). In terms of biological role, catalyzes the hydrolysis of cutin, a polyester that forms the structure of plant cuticle. Shows esterase activity towards p-nitrophenol-linked aliphatic esters (pNP-aliphatic esters). Has a preference for medium chain length (C-4 to C-12) fatty acid esters. Active with p-nitrophenyl palmitate (p-NPP) as substrate. Hydrolyzes triacylglycerol substrates non-specifically with a preference for long, unsaturated fatty acyl chains with the highest activity for triolein. Substrates with cis-9 unsaturation are preferred over the saturated triacylglycerols. Hydrolyzes a wide range of natural oils, especially olive oil, with relatively high activity. Capable of catalyzing synthesis of the flavor ester isoamyl acetate by esterification of isoamyl alcohol using acetic acid as an acyl donor. Degrades synthetic aliphatic polyesters, namely poly(1,4-butylene succinate) extended with 1,6-diisocyanatohexane (PBSc-D) and poly(epsilon-caprolactone) (PCL) plastics. Does not degrade poly(lactic acid) (PLA) nor aromatic poly(ethylene terephthalate) (PET), the most abundant polyester plastic in the world. The chain is Cutinase from Amycolatopsis mediterranei (strain S699) (Nocardia mediterranei).